We begin with the raw amino-acid sequence, 225 residues long: Cytidylate kinase (225 aa).

Residue 11-19 (GPAAAGKST) participates in ATP binding.

It belongs to the cytidylate kinase family. Type 1 subfamily.

The protein resides in the cytoplasm. The catalysed reaction is CMP + ATP = CDP + ADP. The enzyme catalyses dCMP + ATP = dCDP + ADP. This chain is Cytidylate kinase, found in Anoxybacillus flavithermus (strain DSM 21510 / WK1).